Here is a 543-residue protein sequence, read N- to C-terminus: tRNA (guanine(37)-N(1))-methyltransferase (543 aa).

The N-terminal 59 residues, 1–59, are a transit peptide targeting the mitochondrion; the sequence is MLKSLCFVIRPAIVSRPQFRLPTIARLSLRQFQNQPQSVGFFTMAPLETRALALSPSAT. S-adenosyl-L-methionine is bound by residues His282, 320-321, and 348-349; these read DL and DG. The interval 366–405 is disordered; that stretch reads DPAPPPKVSNRQRDREAKEARRKREQAKAAGQPVTETAPM. Asn431 contacts S-adenosyl-L-methionine.

Belongs to the class I-like SAM-binding methyltransferase superfamily. TRM5/TYW2 family. In terms of assembly, monomer.

It is found in the mitochondrion matrix. The protein localises to the nucleus. It localises to the cytoplasm. The catalysed reaction is guanosine(37) in tRNA + S-adenosyl-L-methionine = N(1)-methylguanosine(37) in tRNA + S-adenosyl-L-homocysteine + H(+). Functionally, specifically methylates the N1 position of guanosine-37 in various cytoplasmic and mitochondrial tRNAs. Methylation is not dependent on the nature of the nucleoside 5' of the target nucleoside. This is the first step in the biosynthesis of wybutosine (yW), a modified base adjacent to the anticodon of tRNAs and required for accurate decoding. In Cryptococcus neoformans var. neoformans serotype D (strain JEC21 / ATCC MYA-565) (Filobasidiella neoformans), this protein is tRNA (guanine(37)-N(1))-methyltransferase.